The primary structure comprises 983 residues: Serine/threonine-protein kinase N2 (983 aa).

An REM-1 1 domain is found at 33 to 109; sequence KLDFSDTMVQ…LQELNAHIVV (77 aa). K77 is modified (N6-acetyllysine). The disordered stretch occupies residues 107 to 135; sequence IVVSDPEDSTDCPRTPDTPNSDSRSSTSN. S110 carries the post-translational modification Phosphoserine. Phosphothreonine is present on residues T121 and T124. Positions 121-135 are enriched in low complexity; sequence TPDTPNSDSRSSTSN. 2 consecutive REM-1 domains span residues 121–203 and 204–284; these read TPDT…TNEL and AFDN…ELPR. Phosphoserine occurs at positions 301, 305, 359, and 361. The tract at residues 351 to 382 is disordered; sequence TSVALPGWSPSDNRSSFMSRTSKSKSGSSRNL. In terms of domain architecture, C2 spans 352–472; sequence SVALPGWSPS…LYLEPQGTLF (121 aa). The segment covering 364–380 has biased composition (low complexity); the sequence is RSSFMSRTSKSKSGSSR. A necessary to rescue apical junction formation region spans residues 381–462; the sequence is NLLKTDDLSN…FLDNQRHGMC (82 aa). Phosphoserine occurs at positions 534, 582, 619, and 630. The segment at 553–588 is disordered; the sequence is LAPPASDSTVTKLDFDLEPEPPPAPPRASSLGETDE. The region spanning 656–915 is the Protein kinase domain; the sequence is FRCCAVLGRG…AEDVKKHPFF (260 aa). ATP contacts are provided by residues 662 to 670 and K685; that span reads LGRGHFGKV. D781 functions as the Proton acceptor in the catalytic mechanism. A Phosphothreonine; by PDPK1 modification is found at T815. Residues 916–976 are necessary for the catalytic activity; that stretch reads RLTDWSALMD…EEEQEMFHDF (61 aa). Residues 916–983 enclose the AGC-kinase C-terminal domain; sequence RLTDWSALMD…HDFDYVADWC (68 aa). At S951 the chain carries Phosphoserine. Residue T957 is modified to Phosphothreonine. Residues 977 to 983 form a negatively regulates the responsiveness of the catalytic activity by cardiolipin and is required for optimal activation by the GTP-bound RhoA region; that stretch reads DYVADWC.

It belongs to the protein kinase superfamily. AGC Ser/Thr protein kinase family. PKC subfamily. As to quaternary structure, interacts (via the REM repeats) with RHOA (GTP-bound form preferentially) and interacts (via the REM repeats) with RAC1 (GTP-bound form preferentially); the interactions induce its autophosphorylation. Interacts with NCK1 (via SH3 domains). Interacts with RHOC. Interacts with NCK1 and NCK2. Interacts with CD44. Interacts (via C-terminal kinase domain) with PDPK1; the interaction stimulates PDPK1 kinase activity. Interacts with MAP3K2; the interaction activates PRK2 kinase activity in a MAP3K2-independent kinase activity. Interacts (via C-terminal domain) with AKT1; the interaction occurs with the C-terminal cleavage product of PRK2 in apoptotic cells. Interacts (via C-terminus) with PTPN13 (via PDZ 3 domain). Interacts with CDK10. Phosphorylated during mitosis. Autophosphorylated. Phosphorylated. Phosphorylated by CDK10. In terms of processing, activated by limited proteolysis with trypsin. Proteolytically cleaved by caspase-3 during the induction of apoptotic cell death. Ubiquitous. Highly expressed in liver and lung Expressed in astrocytes (at protein level). Ubiquitous.

The protein localises to the cytoplasm. Its subcellular location is the nucleus. It is found in the membrane. It localises to the cell projection. The protein resides in the lamellipodium. The protein localises to the cytoskeleton. Its subcellular location is the cleavage furrow. It is found in the midbody. It localises to the cell junction. The catalysed reaction is L-seryl-[protein] + ATP = O-phospho-L-seryl-[protein] + ADP + H(+). It catalyses the reaction L-threonyl-[protein] + ATP = O-phospho-L-threonyl-[protein] + ADP + H(+). Kinase activity is activated upon binding to GTP-bound Rho1/Rac1 GTPases. Activated by caspase-3 (CASP3) cleavage during apoptosis. Activated by lipids, particularly cardiolipin and to a lesser extent by other acidic phospholipids and unsaturated fatty acids. Two specific sites, Thr-815 (activation loop of the kinase domain) and Thr-957 (turn motif), need to be phosphorylated for its full activation. Its function is as follows. PKC-related serine/threonine-protein kinase and Rho/Rac effector protein that participates in specific signal transduction responses in the cell. Plays a role in the regulation of cell cycle progression, actin cytoskeleton assembly, cell migration, cell adhesion, tumor cell invasion and transcription activation signaling processes. Phosphorylates CTTN in hyaluronan-induced astrocytes and hence decreases CTTN ability to associate with filamentous actin. Phosphorylates HDAC5, therefore lead to impair HDAC5 import. Direct RhoA target required for the regulation of the maturation of primordial junctions into apical junction formation in bronchial epithelial cells. Required for G2/M phases of the cell cycle progression and abscission during cytokinesis in a ECT2-dependent manner. Stimulates FYN kinase activity that is required for establishment of skin cell-cell adhesion during keratinocytes differentiation. Regulates epithelial bladder cells speed and direction of movement during cell migration and tumor cell invasion. Inhibits Akt pro-survival-induced kinase activity. Mediates Rho protein-induced transcriptional activation via the c-fos serum response factor (SRF). Involved in the negative regulation of ciliogenesis. In Mus musculus (Mouse), this protein is Serine/threonine-protein kinase N2 (Pkn2).